The primary structure comprises 298 residues: GTP cyclohydrolase FolE2 (298 aa).

This sequence belongs to the GTP cyclohydrolase IV family.

It catalyses the reaction GTP + H2O = 7,8-dihydroneopterin 3'-triphosphate + formate + H(+). The protein operates within cofactor biosynthesis; 7,8-dihydroneopterin triphosphate biosynthesis; 7,8-dihydroneopterin triphosphate from GTP: step 1/1. Its function is as follows. Converts GTP to 7,8-dihydroneopterin triphosphate. The chain is GTP cyclohydrolase FolE2 from Neisseria meningitidis serogroup B (strain ATCC BAA-335 / MC58).